The primary structure comprises 1078 residues: A type blood alpha-D-galactosamine galactosaminidase (1078 aa).

The N-terminal stretch at 1–26 (MRGKKFISLTLSTMLCLQLLPTASFA) is a signal peptide. The interval 306–570 (PDSSYDLRWE…NNIWYPSAVG (265 aa)) is glycoside hydrolase 36 domain. Residue D463 is the Nucleophile of the active site. Residue D532 is part of the active site. Residues 699 to 1078 (PDPEPVDPDY…LDYLTYTTNA (380 aa)) form a not required for activity on soluble substrates region.

Belongs to the glycosyl hydrolase 36 family.

The catalysed reaction is an alpha-D-galactosaminyl-(1-&gt;3)-[alpha-L-fucosyl-(1-&gt;2)]-beta-D-galactosyl derivative + H2O = D-galactosamine + an alpha-L-fucosyl-(1-&gt;2)-beta-D-galactosyl derivative. Functionally, one of an enzyme pair that work together to convert the A antigen to the H antigen of the O blood type, which together release galactosamine. Catalyzes the second step in the conversion, acts on the product of the first reaction (FpGalNAcDeAc, AC P0DTR4). Is specific for galactosamine containing sugars, does not cleave GalNAc residues. This chain is A type blood alpha-D-galactosamine galactosaminidase, found in Flavonifractor plautii (Fusobacterium plautii).